A 429-amino-acid chain; its full sequence is UDP-N-acetylglucosamine 1-carboxyvinyltransferase (429 aa).

22 to 23 (KN) contributes to the phosphoenolpyruvate binding site. Arg102 lines the UDP-N-acetyl-alpha-D-glucosamine pocket. Cys126 acts as the Proton donor in catalysis. Cys126 bears the 2-(S-cysteinyl)pyruvic acid O-phosphothioketal mark. The UDP-N-acetyl-alpha-D-glucosamine site is built by Asp316 and Ile338.

Belongs to the EPSP synthase family. MurA subfamily.

It localises to the cytoplasm. The catalysed reaction is phosphoenolpyruvate + UDP-N-acetyl-alpha-D-glucosamine = UDP-N-acetyl-3-O-(1-carboxyvinyl)-alpha-D-glucosamine + phosphate. It functions in the pathway cell wall biogenesis; peptidoglycan biosynthesis. Functionally, cell wall formation. Adds enolpyruvyl to UDP-N-acetylglucosamine. This is UDP-N-acetylglucosamine 1-carboxyvinyltransferase from Methylorubrum extorquens (strain PA1) (Methylobacterium extorquens).